The primary structure comprises 229 residues: MTDFHDKPNIQIMFDSLAPTYDKINGILSLGLHIAWNNALVSLLGETNHLLDLCAGTGRVALSYVQNYPRASATLVDFSTKMLENVQKRHPSAPFSYITSDVTHLPLPDNTFRLASMAYGLRNLSYPLEALREVYRVLQPGGHLGILELTRPATYNPVYLLHKLYLNLVVPSVGRFYSGNSYAYSYLKESIRDLPRDAALEAIFHAAHLRPIRKRKLLFGTATIWILEK.

S-adenosyl-L-methionine-binding positions include threonine 57, aspartate 77, and 101 to 102 (DV).

Belongs to the class I-like SAM-binding methyltransferase superfamily. MenG/UbiE family.

It carries out the reaction a 2-demethylmenaquinol + S-adenosyl-L-methionine = a menaquinol + S-adenosyl-L-homocysteine + H(+). Its pathway is quinol/quinone metabolism; menaquinone biosynthesis; menaquinol from 1,4-dihydroxy-2-naphthoate: step 2/2. Functionally, methyltransferase required for the conversion of demethylmenaquinol (DMKH2) to menaquinol (MKH2). The polypeptide is Demethylmenaquinone methyltransferase (Chlamydia trachomatis serovar L2 (strain ATCC VR-902B / DSM 19102 / 434/Bu)).